The following is a 123-amino-acid chain: Dihydroneopterin triphosphate 2'-epimerase (123 aa).

This sequence belongs to the DHNA family. In terms of assembly, homooctamer. Dimer of tetramers.

It catalyses the reaction 7,8-dihydroneopterin 3'-triphosphate = 7,8-dihydromonapterin 3'-triphosphate. Catalyzes the epimerization of carbon 2' of the side chain of 7,8-dihydroneopterin triphosphate (H2NTP) to form 7,8-dihydromonapterin triphosphate (H2MTP). Is required for tetrahydromonapterin biosynthesis. In Pseudomonas aeruginosa (strain ATCC 15692 / DSM 22644 / CIP 104116 / JCM 14847 / LMG 12228 / 1C / PRS 101 / PAO1), this protein is Dihydroneopterin triphosphate 2'-epimerase.